A 296-amino-acid polypeptide reads, in one-letter code: Elongation factor Ts (296 aa).

Residues 82–85 (TDFV) are involved in Mg(2+) ion dislocation from EF-Tu.

It belongs to the EF-Ts family.

The protein resides in the cytoplasm. Associates with the EF-Tu.GDP complex and induces the exchange of GDP to GTP. It remains bound to the aminoacyl-tRNA.EF-Tu.GTP complex up to the GTP hydrolysis stage on the ribosome. This is Elongation factor Ts from Coxiella burnetii (strain CbuK_Q154) (Coxiella burnetii (strain Q154)).